The sequence spans 740 residues: Ribosomal protein S6 kinase alpha-3 (740 aa).

Positions 1–38 (MPLAQLADPWQKMAVESPSDSAENGQQIMDEPMGEEEI) are disordered. Residues 18–27 (PSDSAENGQQ) show a composition bias toward polar residues. Residues 68 to 327 (FELLKVLGQG…VEEIKRHSFF (260 aa)) enclose the Protein kinase 1 domain. Residues 74-82 (LGQGSFGKV) and Lys-100 each bind ATP. Asp-193 (proton acceptor) is an active-site residue. At Ser-227 the chain carries Phosphoserine; by PDPK1. The AGC-kinase C-terminal domain occupies 328–397 (STIDWNKLYR…VAITSDDESQ (70 aa)). Phosphothreonine is present on Thr-365. Ser-369 and Ser-375 each carry phosphoserine. Ser-386 bears the Phosphoserine; by autocatalysis and MAPKAPK2 mark. Ser-415 is modified (phosphoserine). Residues 422–679 (YEVKEDIGVG…AALVLRHPWI (258 aa)) enclose the Protein kinase 2 domain. Residues 428 to 436 (IGVGSYSVC) and Lys-451 each bind ATP. Tyr-529 carries the post-translational modification Phosphotyrosine; by FGFR3. Asp-539 serves as the catalytic Proton acceptor. 2 positions are modified to phosphoserine: Ser-556 and Ser-715.

The protein belongs to the protein kinase superfamily. AGC Ser/Thr protein kinase family. S6 kinase subfamily. Forms a complex with either MAPK1/ERK2 or MAPK3/ERK1 in quiescent cells. Transiently dissociates following mitogenic stimulation. Interacts with NFATC4, ETV1/ER81 and FGFR1. The cofactor is Mg(2+). In terms of processing, activated by phosphorylation at Ser-227 by PDPK1. Autophosphorylated on Ser-386, as part of the activation process. May be phosphorylated at Thr-365 and Ser-369 by MAPK1/ERK2 and MAPK3/ERK1. Can also be activated via phosphorylation at Ser-386 by MAPKAPK2. Post-translationally, N-terminal myristoylation results in an activated kinase in the absence of added growth factors. In terms of tissue distribution, expressed in many tissues, highest levels in skeletal muscle.

The protein resides in the nucleus. It is found in the cytoplasm. The enzyme catalyses L-seryl-[protein] + ATP = O-phospho-L-seryl-[protein] + ADP + H(+). It catalyses the reaction L-threonyl-[protein] + ATP = O-phospho-L-threonyl-[protein] + ADP + H(+). Its activity is regulated as follows. Upon extracellular signal or mitogen stimulation, phosphorylated at Thr-577 in the C-terminal kinase domain (CTKD) by MAPK1/ERK2 and MAPK3/ERK1. The activated CTKD then autophosphorylates Ser-386, allowing binding of PDPK1, which in turn phosphorylates Ser-227 in the N-terminal kinase domain (NTDK) leading to the full activation of the protein and subsequent phosphorylation of the substrates by the NTKD. Its function is as follows. Serine/threonine-protein kinase that acts downstream of ERK (MAPK1/ERK2 and MAPK3/ERK1) signaling and mediates mitogenic and stress-induced activation of the transcription factors CREB1, ETV1/ER81 and NR4A1/NUR77, regulates translation through RPS6 and EIF4B phosphorylation, and mediates cellular proliferation, survival, and differentiation by modulating mTOR signaling and repressing pro-apoptotic function of BAD and DAPK1. In fibroblast, is required for EGF-stimulated phosphorylation of CREB1 and histone H3 at 'Ser-10', which results in the subsequent transcriptional activation of several immediate-early genes. In response to mitogenic stimulation (EGF and PMA), phosphorylates and activates NR4A1/NUR77 and ETV1/ER81 transcription factors and the cofactor CREBBP. Upon insulin-derived signal, acts indirectly on the transcription regulation of several genes by phosphorylating GSK3B at 'Ser-9' and inhibiting its activity. Phosphorylates RPS6 in response to serum or EGF via an mTOR-independent mechanism and promotes translation initiation by facilitating assembly of the preinitiation complex. In response to insulin, phosphorylates EIF4B, enhancing EIF4B affinity for the EIF3 complex and stimulating cap-dependent translation. Is involved in the mTOR nutrient-sensing pathway by directly phosphorylating TSC2 at 'Ser-1798', which potently inhibits TSC2 ability to suppress mTOR signaling, and mediates phosphorylation of RPTOR, which regulates mTORC1 activity and may promote rapamycin-sensitive signaling independently of the PI3K/AKT pathway. Mediates cell survival by phosphorylating the pro-apoptotic proteins BAD and DAPK1 and suppressing their pro-apoptotic function. Promotes the survival of hepatic stellate cells by phosphorylating CEBPB in response to the hepatotoxin carbon tetrachloride (CCl4). Is involved in cell cycle regulation by phosphorylating the CDK inhibitor CDKN1B, which promotes CDKN1B association with 14-3-3 proteins and prevents its translocation to the nucleus and inhibition of G1 progression. In LPS-stimulated dendritic cells, is involved in TLR4-induced macropinocytosis, and in myeloma cells, acts as effector of FGFR3-mediated transformation signaling, after direct phosphorylation at Tyr-529 by FGFR3. Negatively regulates EGF-induced MAPK1/3 phosphorylation via phosphorylation of SOS1. Phosphorylates SOS1 at 'Ser-1134' and 'Ser-1161' that create YWHAB and YWHAE binding sites and which contribute to the negative regulation of MAPK1/3 phosphorylation. Phosphorylates EPHA2 at 'Ser-897', the RPS6KA-EPHA2 signaling pathway controls cell migration. Acts as a regulator of osteoblast differentiation by mediating phosphorylation of ATF4, thereby promoting ATF4 transactivation activity. The polypeptide is Ribosomal protein S6 kinase alpha-3 (RPS6KA3) (Homo sapiens (Human)).